A 312-amino-acid polypeptide reads, in one-letter code: Methionyl-tRNA formyltransferase (312 aa).

109–112 (SLLP) serves as a coordination point for (6S)-5,6,7,8-tetrahydrofolate.

This sequence belongs to the Fmt family.

It catalyses the reaction L-methionyl-tRNA(fMet) + (6R)-10-formyltetrahydrofolate = N-formyl-L-methionyl-tRNA(fMet) + (6S)-5,6,7,8-tetrahydrofolate + H(+). Its function is as follows. Attaches a formyl group to the free amino group of methionyl-tRNA(fMet). The formyl group appears to play a dual role in the initiator identity of N-formylmethionyl-tRNA by promoting its recognition by IF2 and preventing the misappropriation of this tRNA by the elongation apparatus. This is Methionyl-tRNA formyltransferase from Anaeromyxobacter dehalogenans (strain 2CP-1 / ATCC BAA-258).